Reading from the N-terminus, the 114-residue chain is Probable 4-amino-4-deoxy-L-arabinose-phosphoundecaprenol flippase subunit ArnE (114 aa).

3 helical membrane-spanning segments follow: residues 41–61 (MWLW…LLVL), 64–84 (MDVG…TLVG), and 91–111 (PVDP…FQLG).

It belongs to the ArnE family. As to quaternary structure, heterodimer of ArnE and ArnF.

Its subcellular location is the cell inner membrane. It functions in the pathway bacterial outer membrane biogenesis; lipopolysaccharide biosynthesis. Its function is as follows. Translocates 4-amino-4-deoxy-L-arabinose-phosphoundecaprenol (alpha-L-Ara4N-phosphoundecaprenol) from the cytoplasmic to the periplasmic side of the inner membrane. This is Probable 4-amino-4-deoxy-L-arabinose-phosphoundecaprenol flippase subunit ArnE from Pseudomonas savastanoi pv. phaseolicola (strain 1448A / Race 6) (Pseudomonas syringae pv. phaseolicola (strain 1448A / Race 6)).